Reading from the N-terminus, the 422-residue chain is 3-phosphoshikimate 1-carboxyvinyltransferase (422 aa).

Positions 20, 21, and 25 each coordinate 3-phosphoshikimate. Lys-20 lines the phosphoenolpyruvate pocket. The phosphoenolpyruvate site is built by Gly-90 and Arg-118. Residues Ser-163, Ser-164, Gln-165, Ser-191, Asp-306, and Lys-333 each contribute to the 3-phosphoshikimate site. Gln-165 provides a ligand contact to phosphoenolpyruvate. Catalysis depends on Asp-306, which acts as the Proton acceptor. Positions 337 and 378 each coordinate phosphoenolpyruvate.

It belongs to the EPSP synthase family. In terms of assembly, monomer.

It localises to the cytoplasm. The enzyme catalyses 3-phosphoshikimate + phosphoenolpyruvate = 5-O-(1-carboxyvinyl)-3-phosphoshikimate + phosphate. Its pathway is metabolic intermediate biosynthesis; chorismate biosynthesis. In terms of biological role, catalyzes the transfer of the enolpyruvyl moiety of phosphoenolpyruvate (PEP) to the 5-hydroxyl of shikimate-3-phosphate (S3P) to produce enolpyruvyl shikimate-3-phosphate and inorganic phosphate. The chain is 3-phosphoshikimate 1-carboxyvinyltransferase from Methanocella arvoryzae (strain DSM 22066 / NBRC 105507 / MRE50).